The primary structure comprises 168 residues: Peptide deformylase 2 (168 aa).

2 residues coordinate Fe cation: Cys-91 and His-133. Residue Glu-134 is part of the active site. His-137 serves as a coordination point for Fe cation.

This sequence belongs to the polypeptide deformylase family. The cofactor is Fe(2+).

The enzyme catalyses N-terminal N-formyl-L-methionyl-[peptide] + H2O = N-terminal L-methionyl-[peptide] + formate. Removes the formyl group from the N-terminal Met of newly synthesized proteins. Requires at least a dipeptide for an efficient rate of reaction. N-terminal L-methionine is a prerequisite for activity but the enzyme has broad specificity at other positions. In Vibrio cholerae serotype O1 (strain ATCC 39315 / El Tor Inaba N16961), this protein is Peptide deformylase 2.